The following is a 292-amino-acid chain: Bifunctional protein FolD (292 aa).

NADP(+) is bound by residues 161-163 and I231; that span reads GRS.

The protein belongs to the tetrahydrofolate dehydrogenase/cyclohydrolase family. As to quaternary structure, homodimer.

It catalyses the reaction (6R)-5,10-methylene-5,6,7,8-tetrahydrofolate + NADP(+) = (6R)-5,10-methenyltetrahydrofolate + NADPH. The enzyme catalyses (6R)-5,10-methenyltetrahydrofolate + H2O = (6R)-10-formyltetrahydrofolate + H(+). It participates in one-carbon metabolism; tetrahydrofolate interconversion. Functionally, catalyzes the oxidation of 5,10-methylenetetrahydrofolate to 5,10-methenyltetrahydrofolate and then the hydrolysis of 5,10-methenyltetrahydrofolate to 10-formyltetrahydrofolate. This is Bifunctional protein FolD from Protochlamydia amoebophila (strain UWE25).